The primary structure comprises 400 residues: CinA-like protein (400 aa).

It belongs to the CinA family.

This chain is CinA-like protein, found in Escherichia coli (strain SE11).